The sequence spans 303 residues: Ribosomal RNA small subunit methyltransferase A (303 aa).

Residues 1–19 (MSSRPPASFSATFSAARSS) show a composition bias toward low complexity. Residues 1–34 (MSSRPPASFSATFSAARSSKCVPPPRRPSTDVSL) are disordered. S-adenosyl-L-methionine is bound by residues H55, L57, G82, E104, D130, and N149.

It belongs to the class I-like SAM-binding methyltransferase superfamily. rRNA adenine N(6)-methyltransferase family. RsmA subfamily.

It is found in the cytoplasm. The enzyme catalyses adenosine(1518)/adenosine(1519) in 16S rRNA + 4 S-adenosyl-L-methionine = N(6)-dimethyladenosine(1518)/N(6)-dimethyladenosine(1519) in 16S rRNA + 4 S-adenosyl-L-homocysteine + 4 H(+). Functionally, specifically dimethylates two adjacent adenosines (A1518 and A1519) in the loop of a conserved hairpin near the 3'-end of 16S rRNA in the 30S particle. May play a critical role in biogenesis of 30S subunits. This is Ribosomal RNA small subunit methyltransferase A from Gluconobacter oxydans (strain 621H) (Gluconobacter suboxydans).